The primary structure comprises 132 residues: Heat shock protein 15 homolog (132 aa).

The 63-residue stretch at 11–73 folds into the S4 RNA-binding domain; it reads VRLDKWLWAA…DEREVRVLQV (63 aa). 2 stretches are compositionally biased toward basic and acidic residues: residues 94–105 and 114–125; these read LKKRAENSEARR and PERRPDKQERRQ. The interval 94 to 132 is disordered; that stretch reads LKKRAENSEARRFNSQFAPSPERRPDKQERRQLIKVKQY.

This sequence belongs to the HSP15 family.

In terms of biological role, may play an important role in binding of nucleic acid. More specific for RNA. The chain is Heat shock protein 15 homolog (hslR) from Aeromonas salmonicida.